A 239-amino-acid chain; its full sequence is Suppressor of organelle fusion 1 (239 aa).

Belongs to the WD repeat WDR91 family. Interacts with sorf-2; the interaction is direct. Interacts with bec-1.

It is found in the early endosome. The protein localises to the late endosome. It localises to the cytoplasm. Functionally, together with sorf-2 negatively regulates the levels of phosphatidylinositol 3-phosphate (PtdIns3P) to enable the conversion of early endosomes to late endosomes. Binds to sorf-2 and the sorf-1-sorf-2 complex likely acts through bec-1, a non-catalytic subunit of phosphatidylinositol 3-kinase (PI3K), to suppress PI3K activity, thereby negatively regulating endosomal PtdIns3P levels. The sequence is that of Suppressor of organelle fusion 1 from Caenorhabditis elegans.